The chain runs to 77 residues: uncharacterized protein (77 aa).

The interval 56–77 (SVIPKQQPPSSAAAISESEFED) is disordered. The span at 65–77 (SSAAAISESEFED) shows a compositional bias: low complexity.

This is an uncharacterized protein from Frog virus 3 (isolate Goorha) (FV-3).